Reading from the N-terminus, the 182-residue chain is MKIAIFGGSFDPIHIAHKAIVKRALEELEIDKLIIVPTYLNPFKSSFYLEPKVRFELLKKVFEKVEKVEISDYEINQEKLSYSFNTVNYLKDLYKASKIYFILGQDNVENLDKWYKIEELKKMVEFVIATRSGYKSDKLKDFRTLNIDIDVSSTLLRTQIDTKYIPKEIKEDILNLDKGKKN.

The protein belongs to the NadD family.

The enzyme catalyses nicotinate beta-D-ribonucleotide + ATP + H(+) = deamido-NAD(+) + diphosphate. The protein operates within cofactor biosynthesis; NAD(+) biosynthesis; deamido-NAD(+) from nicotinate D-ribonucleotide: step 1/1. Functionally, catalyzes the reversible adenylation of nicotinate mononucleotide (NaMN) to nicotinic acid adenine dinucleotide (NaAD). In Aliarcobacter butzleri (strain RM4018) (Arcobacter butzleri), this protein is Probable nicotinate-nucleotide adenylyltransferase.